The following is a 232-amino-acid chain: Aspartate/glutamate leucyltransferase (232 aa).

It belongs to the R-transferase family. Bpt subfamily.

The protein resides in the cytoplasm. It catalyses the reaction N-terminal L-glutamyl-[protein] + L-leucyl-tRNA(Leu) = N-terminal L-leucyl-L-glutamyl-[protein] + tRNA(Leu) + H(+). It carries out the reaction N-terminal L-aspartyl-[protein] + L-leucyl-tRNA(Leu) = N-terminal L-leucyl-L-aspartyl-[protein] + tRNA(Leu) + H(+). In terms of biological role, functions in the N-end rule pathway of protein degradation where it conjugates Leu from its aminoacyl-tRNA to the N-termini of proteins containing an N-terminal aspartate or glutamate. This is Aspartate/glutamate leucyltransferase from Vibrio vulnificus (strain CMCP6).